The primary structure comprises 383 residues: Succinyl-diaminopimelate desuccinylase (383 aa).

Residue His-73 participates in Zn(2+) binding. The active site involves Asp-75. A Zn(2+)-binding site is contributed by Asp-107. Catalysis depends on Glu-141, which acts as the Proton acceptor. 3 residues coordinate Zn(2+): Glu-142, Glu-170, and His-356.

This sequence belongs to the peptidase M20A family. DapE subfamily. Homodimer. The cofactor is Zn(2+). Co(2+) is required as a cofactor.

The enzyme catalyses N-succinyl-(2S,6S)-2,6-diaminopimelate + H2O = (2S,6S)-2,6-diaminopimelate + succinate. Its pathway is amino-acid biosynthesis; L-lysine biosynthesis via DAP pathway; LL-2,6-diaminopimelate from (S)-tetrahydrodipicolinate (succinylase route): step 3/3. Its function is as follows. Catalyzes the hydrolysis of N-succinyl-L,L-diaminopimelic acid (SDAP), forming succinate and LL-2,6-diaminopimelate (DAP), an intermediate involved in the bacterial biosynthesis of lysine and meso-diaminopimelic acid, an essential component of bacterial cell walls. This Pseudomonas fluorescens (strain Pf0-1) protein is Succinyl-diaminopimelate desuccinylase.